The sequence spans 407 residues: Dual-specificity RNA methyltransferase RlmN (407 aa).

The active-site Proton acceptor is Glu136. In terms of domain architecture, Radical SAM core spans 144 to 378 (REDRGAVCIS…MDAGFASPIR (235 aa)). A disulfide bridge links Cys151 with Cys389. [4Fe-4S] cluster-binding residues include Cys158, Cys162, and Cys165. S-adenosyl-L-methionine contacts are provided by residues 215 to 216 (GE), Ser247, 269 to 271 (SLH), and Asn346. Cys389 serves as the catalytic S-methylcysteine intermediate.

Belongs to the radical SAM superfamily. RlmN family. [4Fe-4S] cluster is required as a cofactor.

The protein resides in the cytoplasm. It catalyses the reaction adenosine(2503) in 23S rRNA + 2 reduced [2Fe-2S]-[ferredoxin] + 2 S-adenosyl-L-methionine = 2-methyladenosine(2503) in 23S rRNA + 5'-deoxyadenosine + L-methionine + 2 oxidized [2Fe-2S]-[ferredoxin] + S-adenosyl-L-homocysteine. The catalysed reaction is adenosine(37) in tRNA + 2 reduced [2Fe-2S]-[ferredoxin] + 2 S-adenosyl-L-methionine = 2-methyladenosine(37) in tRNA + 5'-deoxyadenosine + L-methionine + 2 oxidized [2Fe-2S]-[ferredoxin] + S-adenosyl-L-homocysteine. In terms of biological role, specifically methylates position 2 of adenine 2503 in 23S rRNA and position 2 of adenine 37 in tRNAs. m2A2503 modification seems to play a crucial role in the proofreading step occurring at the peptidyl transferase center and thus would serve to optimize ribosomal fidelity. The protein is Dual-specificity RNA methyltransferase RlmN of Gluconobacter oxydans (strain 621H) (Gluconobacter suboxydans).